Here is a 293-residue protein sequence, read N- to C-terminus: tRNA pseudouridine synthase B (293 aa).

The active-site Nucleophile is the D40.

It belongs to the pseudouridine synthase TruB family. Type 1 subfamily.

It catalyses the reaction uridine(55) in tRNA = pseudouridine(55) in tRNA. Responsible for synthesis of pseudouridine from uracil-55 in the psi GC loop of transfer RNAs. The protein is tRNA pseudouridine synthase B of Rickettsia akari (strain Hartford).